The sequence spans 86 residues: MAHKKGVGSSRNGRDSNPKYLGVKIFGGQAIDAGNIIVRQRGTQFHPGAGVGLGRDHTLFALVDGKVEFSVKGVKKRRTVSVVAEA.

Belongs to the bacterial ribosomal protein bL27 family.

This chain is Large ribosomal subunit protein bL27, found in Xanthomonas oryzae pv. oryzae (strain PXO99A).